Consider the following 318-residue polypeptide: Olfactory receptor 2T3 (318 aa).

At 1–30 (MCSGNQTSQNQTASTDFTLTGLFAESKHAA) the chain is on the extracellular side. Residues Asn5 and Asn10 are each glycosylated (N-linked (GlcNAc...) asparagine). The helical transmembrane segment at 31-54 (LLYTVTFLLFLMALTGNALLILLI) threads the bilayer. Residues 55-62 (HSEPRLHT) lie on the Cytoplasmic side of the membrane. A helical transmembrane segment spans residues 63 to 84 (PMYFFISQLALMDLMYLCVTVP). Residues 85 to 105 (KMLVGQVTGDDTISPSGCGIQ) are Extracellular-facing. An intrachain disulfide couples Cys102 to Cys194. A helical transmembrane segment spans residues 106–125 (MFFYLTLAGAEVFLLAAMAY). At 126–144 (DRYAAVCRPLHYPLLMNQR) the chain is on the cytoplasmic side. A helical membrane pass occupies residues 145–163 (VCQLLVSACWVLGMVDGLL). Over 164-200 (LTPITMSFPFCQSRKILSFFCETPALLKLSCSDVSLY) the chain is Extracellular. The chain crosses the membrane as a helical span at residues 201 to 224 (KTLMYLCCILMLLAPIMVISSSYT). Over 225 to 241 (LILHLIHRMNSAAGHRK) the chain is Cytoplasmic. A helical membrane pass occupies residues 242-264 (ALATCSSHMIIVLLLFGASFYTY). At 265 to 277 (MLPSSYHTAEQDM) the chain is on the extracellular side. Residues 278-297 (MVSAFYTIFTPVLNPLIYSL) traverse the membrane as a helical segment. At 298–318 (RNKDVTRALRSMMQSRMNQEK) the chain is on the cytoplasmic side.

The protein belongs to the G-protein coupled receptor 1 family.

The protein localises to the cell membrane. Functionally, odorant receptor. The sequence is that of Olfactory receptor 2T3 (OR2T3) from Homo sapiens (Human).